Here is a 341-residue protein sequence, read N- to C-terminus: D-aspartate oxidase (341 aa).

FAD-binding residues include D36, R37, T43, S44, M50, G307, I311, and S312. The Microbody targeting signal motif lies at S339–L341.

This sequence belongs to the DAMOX/DASOX family. In terms of assembly, dimer or tetramer. Interacts with PEX5; the interaction is direct and required for localization of DDO to the peroxisome. The cofactor is FAD. As to expression, expressed in the small intestine (at protein level). Expressed in the ependymal cell layer of the telencephalic ventricles, hippocampus, thalamus, cerebellum, midbrain region, pons, olfactory bulbs, and cortex. Repressed in the testis. In terms of tissue distribution, expressed in the kidney, liver, stomach, pancreas, uterus, lactating breast, involuting mammary gland, brain, heart, lung, and skin. Expressed in kidney, liver, pancreas, and in the mammary gland regardless of lactation status.

It localises to the peroxisome matrix. The protein localises to the cytoplasm. The protein resides in the cytosol. The enzyme catalyses D-aspartate + O2 + H2O = oxaloacetate + H2O2 + NH4(+). It carries out the reaction D-glutamate + O2 + H2O = H2O2 + 2-oxoglutarate + NH4(+). With respect to regulation, inhibited by the benzodiazepine olanzapine; chronic systemic administration of the benzodiazepine increases levels of D-aspartate and L-glutamate in the prefrontal cortex. Efficiently inhibited by 5-aminonicotinic acid (5-AN) and 1,4-Dihydropyrido[2,3-b]pyrazine-2,3-dione (DPPD). Inhibited by aminooxyacetic acid, thiolactomycin, anthranilic acid, malonate, meso-tartrate and L-tartrate. Benzoate has no effect on activity. Functionally, selectively catalyzes the oxidative deamination of acidic amino acids. Suppresses the level of D-aspartate in the brain, an amino acid that can act as an agonist for glutamate receptors. Protects the organism from the toxicity of D-amino acids. May also function in the intestine. Its function is as follows. Selectively catalyzes the oxidative deamination of acidic amino acids. Does not exhibit D-aspartate oxidase activity. In Mus musculus (Mouse), this protein is D-aspartate oxidase (Ddo).